The chain runs to 128 residues: LIM domain-containing protein 2 (128 aa).

Met-1 bears the N-acetylmethionine mark. The tract at residues 1-25 (MFQAAGAAQATPSHEAKGGGSSSTV) is disordered. Residues 39–99 (ETCAACQKTV…KPHFQQLFKS (61 aa)) form the LIM zinc-binding domain. Positions 41, 44, 62, 65, 68, 71, 89, and 92 each coordinate Zn(2+).

As to quaternary structure, interacts with ILK.

The protein resides in the cytoplasm. Its subcellular location is the nucleus. Functionally, acts as an activator of the protein-kinase ILK, thereby regulating cell motility. In Bos taurus (Bovine), this protein is LIM domain-containing protein 2 (LIMD2).